We begin with the raw amino-acid sequence, 109 residues long: Cell division suppressor protein YneA (109 aa).

The LysM domain maps to 39 to 90; that stretch reads SEVDVNEGDSIWALADQYAAKSDMAKADFVSWVEKENNLTDGHVKAGDYVVI.

The protein belongs to the YneA family.

Its subcellular location is the cytoplasm. Its function is as follows. Inhibits cell division during the SOS response. Affects a later stage of the cell division protein assembly, after the assembly of the Z ring, by probably suppressing recruitment of FtsL and/or DivIC to the division machinery. The protein is Cell division suppressor protein YneA of Listeria innocua serovar 6a (strain ATCC BAA-680 / CLIP 11262).